A 343-amino-acid chain; its full sequence is Transmembrane protein 82 (343 aa).

A run of 8 helical transmembrane segments spans residues 30–50, 77–97, 121–141, 145–167, 203–223, 233–252, 263–283, and 285–305; these read GLIG…YFFV, LAGL…LVVL, LQLY…GLSF, GAPH…GLGA, LLGR…VALI, AMRF…IYMQ, SQVQ…LTVG, and WLDL…LVGV. Positions 320 to 333 are enriched in pro residues; it reads QRPPVSTPSQPLPS. Residues 320–343 are disordered; it reads QRPPVSTPSQPLPSAPQSQSSAPS. The span at 334 to 343 shows a compositional bias: low complexity; it reads APQSQSSAPS.

This sequence belongs to the TMEM82 family.

The protein localises to the membrane. The polypeptide is Transmembrane protein 82 (TMEM82) (Homo sapiens (Human)).